The primary structure comprises 100 residues: Co-chaperonin GroES (100 aa).

Belongs to the GroES chaperonin family. Heptamer of 7 subunits arranged in a ring. Interacts with the chaperonin GroEL.

The protein localises to the cytoplasm. Its function is as follows. Together with the chaperonin GroEL, plays an essential role in assisting protein folding. The GroEL-GroES system forms a nano-cage that allows encapsulation of the non-native substrate proteins and provides a physical environment optimized to promote and accelerate protein folding. GroES binds to the apical surface of the GroEL ring, thereby capping the opening of the GroEL channel. The sequence is that of Co-chaperonin GroES from Mycolicibacterium smegmatis (strain ATCC 700084 / mc(2)155) (Mycobacterium smegmatis).